We begin with the raw amino-acid sequence, 184 residues long: Endothelial cell-specific molecule 1 (184 aa).

The N-terminal stretch at 1–19 (MKSVLLLTTLLVPAHLVAA) is a signal peptide. The IGFBP N-terminal domain maps to 24–102 (YAVDCPQHCD…GEEFGICKDC (79 aa)). Cystine bridges form between Cys28–Cys51, Cys32–Cys53, Cys37–Cys54, Cys43–Cys57, Cys65–Cys83, and Cys77–Cys99. O-linked (Xyl...) (chondroitin sulfate) serine glycosylation is present at Ser156.

As to quaternary structure, monomer. In terms of processing, may contain intrachain disulfide bonds. Post-translationally, O-glycosylated; contains chondroitin sulfate and dermatan sulfate. In terms of tissue distribution, expressed in lung, on the vascular capillary network within alveolar walls, and also at lower level in kidney.

The protein resides in the secreted. In terms of biological role, involved in angiogenesis; promotes angiogenic sprouting. May have potent implications in lung endothelial cell-leukocyte interactions. The sequence is that of Endothelial cell-specific molecule 1 (ESM1) from Homo sapiens (Human).